Reading from the N-terminus, the 351-residue chain is High-affinity nickel transport protein (351 aa).

At 1–19 (MFQLLAGVRMNSTGRPRAK) the chain is on the cytoplasmic side. The chain crosses the membrane as a helical span at residues 20-40 (IILLYALLIAFNIGAWLCALA). Over 41–51 (AFRDHPVLLGT) the chain is Periplasmic. A helical transmembrane segment spans residues 52–72 (ALLAYGLGLRHAVDADHLAAI). Residues 73-94 (DNVTRKLMQDGRRPITAGLWFS) are Cytoplasmic-facing. A helical membrane pass occupies residues 95–115 (LGHSSVVVLASVLIAVMATTL). Residues 116–128 (QERLDAFHEVGSV) lie on the Periplasmic side of the membrane. A helical membrane pass occupies residues 129 to 149 (IGTLASALFLFAIAAINLVIL). Topologically, residues 150 to 199 (RSAYRAFRRVRRGGIYVEEDFDLLFGNRGFLARIFRPLFRFITRSWHMYP) are cytoplasmic. Residues 200-220 (LGMLFALGFDTATEVALLGIS) form a helical membrane-spanning segment. At 221–243 (TMEASRGVPIWSILVFPALFTAG) the chain is on the periplasmic side. The chain crosses the membrane as a helical span at residues 244-264 (MALIDTIDSILMCGAYAWAYA). Topologically, residues 265-269 (KPVRK) are cytoplasmic. A helical membrane pass occupies residues 270 to 290 (LYYNMTITFVSAIVALIVGGI). The Periplasmic segment spans residues 291–316 (ETLGLLADKFMLKGVFWNAVGALNEN). The chain crosses the membrane as a helical span at residues 317–337 (FCQLGFVIIGIFTVCWVVSIV). The Cytoplasmic segment spans residues 338–351 (VYRLRRYDDSEVRA).

This sequence belongs to the NiCoT transporter (TC 2.A.52) family.

The protein localises to the cell inner membrane. In terms of biological role, high-affinity nickel transporter responsible for nickel uptake. Necessary for high levels of activity of hydrogenase and urease. Does not transport cobalt. This chain is High-affinity nickel transport protein (hoxN), found in Cupriavidus necator (strain ATCC 17699 / DSM 428 / KCTC 22496 / NCIMB 10442 / H16 / Stanier 337) (Ralstonia eutropha).